A 430-amino-acid chain; its full sequence is Putative ABC transporter periplasmic-binding protein YcjN (430 aa).

A signal peptide spans 1-19; the sequence is MIKSKIVLLSALVSCALIS.

It belongs to the bacterial solute-binding protein 1 family.

It localises to the periplasm. Its function is as follows. Probably part of the binding-protein-dependent transport system YcjNOP. This Escherichia coli (strain K12) protein is Putative ABC transporter periplasmic-binding protein YcjN (ycjN).